Here is a 56-residue protein sequence, read N- to C-terminus: Large ribosomal subunit protein bL32 (56 aa).

A compositionally biased stretch (basic residues) spans 1-16; sequence MAVQKNKKSRSKRGMR. Residues 1-36 are disordered; that stretch reads MAVQKNKKSRSKRGMRRSHDSLSTPQLSVDSTSGEL. Residues 21-34 show a composition bias toward polar residues; the sequence is SLSTPQLSVDSTSG.

It belongs to the bacterial ribosomal protein bL32 family.

This chain is Large ribosomal subunit protein bL32, found in Shewanella sediminis (strain HAW-EB3).